Here is a 332-residue protein sequence, read N- to C-terminus: Beta-hexosaminidase (332 aa).

Substrate contacts are provided by residues Asp62, Arg70, Arg131, and Lys161–His162. His174 acts as the Proton donor/acceptor in catalysis. The active-site Nucleophile is Asp244.

Belongs to the glycosyl hydrolase 3 family. NagZ subfamily.

It localises to the cytoplasm. It catalyses the reaction Hydrolysis of terminal non-reducing N-acetyl-D-hexosamine residues in N-acetyl-beta-D-hexosaminides.. The protein operates within cell wall biogenesis; peptidoglycan recycling. Functionally, plays a role in peptidoglycan recycling by cleaving the terminal beta-1,4-linked N-acetylglucosamine (GlcNAc) from peptide-linked peptidoglycan fragments, giving rise to free GlcNAc, anhydro-N-acetylmuramic acid and anhydro-N-acetylmuramic acid-linked peptides. This Pseudomonas aeruginosa (strain LESB58) protein is Beta-hexosaminidase.